Reading from the N-terminus, the 655-residue chain is A-type voltage-gated potassium channel KCND3 (655 aa).

At 1 to 182 (MAAGVAAWLP…FENPHTSTLA (182 aa)) the chain is on the cytoplasmic side. The tract at residues 6 to 21 (AAWLPFARAAAIGWMP) is interaction with KCNIP1 and KCNIP2. The segment at 70-78 (EKEFFFNED) is interaction with KCNIP1. Zn(2+) is bound by residues His-104, Cys-110, Cys-131, and Cys-132. Position 153 is a phosphoserine (Ser-153). The chain crosses the membrane as a helical span at residues 183 to 204 (LVFYYVTGFFIAVSVITNVVET). The Extracellular portion of the chain corresponds to 205–223 (VPCGTVPGSKELPCGERYS). Residues 224–246 (VAFFCLDTACVMIFTVEYLLRLF) traverse the membrane as a helical segment. At 247–253 (AAPSRYR) the chain is on the cytoplasmic side. Residues 254–277 (FIRSVMSIIDVVAIMPYYIGLVMT) form a helical membrane-spanning segment. Residues 278–283 (NNEDVS) are Extracellular-facing. Residues 284 to 306 (GAFVTLRVFRVFRIFKFSRHSQG) traverse the membrane as a helical; Voltage-sensor segment. The Cytoplasmic segment spans residues 307 to 318 (LRILGYTLKSCA). The helical transmembrane segment at 319–343 (SELGFLLFSLTMAIIIFATVMFYAE) threads the bilayer. Residues 344 to 352 (KGSSASKFT) are Extracellular-facing. Positions 353 to 366 (SIPASFWYTIVTMT) form an intramembrane region, helical. Residues Thr-367, Leu-368, Gly-369, and Tyr-370 each coordinate K(+). The Selectivity filter motif lies at 367–372 (TLGYGD). The stretch at 367–374 (TLGYGDMV) is an intramembrane region. A helical membrane pass occupies residues 378–400 (IAGKIFGSICSLSGVLVIALPVP). The Cytoplasmic portion of the chain corresponds to 401 to 655 (VIVSNFSRIY…ASNVVKVSVL (255 aa)). Phosphothreonine is present on Thr-459. The segment at 470–487 (SLIESQHHHLLHCLEKTT) is interaction with KCNIP1 and KCNIP2. A mediates dendritic targeting region spans residues 472-487 (IESQHHHLLHCLEKTT). Ser-569 bears the Phosphoserine; by CaMK2D mark. Ser-585 carries the phosphoserine modification. Residues 618–644 (PAPPALTPEGETRPPPASPGPNTNIPS) form a disordered region.

This sequence belongs to the potassium channel family. D (Shal) (TC 1.A.1.2) subfamily. Kv4.3/KCND3 sub-subfamily. As to quaternary structure, homotetramer. Heterotetramer with KCND2. Associates with the regulatory subunits KCNIP3 and KCNIP4. Interacts with KCNE1, KCNE2, SCN1B and KCNAB1 and DLG1. Component of heteromultimeric potassium channels. Identified in potassium channel complexes containing KCND1, KCND2, KCND3, KCNIP1, KCNIP2, KCNIP3, KCNIP4, DPP6 and DPP10. Interacts with KCNIP1; each KCNIP1 monomer interacts with two adjacent KCND3 subunits, through both the N-terminal inactivation ball of a KCND3 subunit and a C-terminal helix from the adjacent KCND3 subunit, clamping them together; this interaction stabilizes the tetrameric form and modulates the channel gating kinetics namely channel activation and inactivation kinetics and rate of recovery from inactivation. Interacts with DPP6; this interaction modulates the channel gating kinetics namely channel activation and inactivation kinetics and rate of recovery from inactivation. Interacts with KCNIP2; each KCNIP2 monomer interacts with two adjacent KCND3 subunits, through both the N-terminal inactivation ball of a KCND3 subunit and a C-terminal helix from the adjacent KCND3 subunit, clamping them together; this interaction modulates the channel gating kinetics. Post-translationally, regulated through phosphorylation at Ser-569 by CaMK2D. As to expression, detected in carotid body chemoreceptor cells and in frontal cortex.

Its subcellular location is the cell membrane. The protein resides in the sarcolemma. The protein localises to the cell projection. It is found in the dendrite. The catalysed reaction is K(+)(in) = K(+)(out). Functionally, pore-forming (alpha) subunit of voltage-gated A-type potassium channels that mediates transmembrane potassium transport in excitable membranes, in brain and heart. In cardiomyocytes, may generate the transient outward potassium current I(To). In neurons, may conduct the transient subthreshold somatodendritic A-type potassium current (ISA). Kinetics properties are characterized by fast activation at subthreshold membrane potentials, rapid inactivation, and quick recovery from inactivation. Channel properties are modulated by interactions with regulatory subunits. Interaction with the regulatory subunits KCNIP1 or KCNIP2 modulates the channel gating kinetics namely channel activation and inactivation kinetics and rate of recovery from inactivation. Likewise, interaction with DPP6 modulates the channel gating kinetics namely channel activation and inactivation kinetics. The sequence is that of A-type voltage-gated potassium channel KCND3 from Oryctolagus cuniculus (Rabbit).